The sequence spans 522 residues: Sorting nexin-1 (522 aa).

Disordered regions lie at residues 1–89 and 115–142; these read MASG…QDLF and SLPP…QEDQ. 2 positions are modified to phosphoserine: serine 32 and serine 39. The span at 35-45 shows a compositional bias: acidic residues; the sequence is EAGDSDTEGED. Phosphothreonine is present on residues threonine 41 and threonine 48. Residues serine 58 and serine 72 each carry the phosphoserine modification. Residues 60–73 show a composition bias toward polar residues; it reads KRTTSLLPINNGSK. Residues 132–142 are compositionally biased toward acidic residues; that stretch reads EELEEEEQEDQ. The PX domain maps to 143–272; the sequence is FDLTVGITDP…EFLEKEELPR (130 aa). Arginine 186, serine 188, and lysine 214 together coordinate a 1,2-diacyl-sn-glycero-3-phospho-(1D-myo-inositol-3-phosphate). Serine 188 carries the post-translational modification Phosphoserine. Residue lysine 237 is modified to N6-acetyllysine. An a 1,2-diacyl-sn-glycero-3-phospho-(1D-myo-inositol-3-phosphate)-binding site is contributed by arginine 238. Serine 280 carries the post-translational modification Phosphoserine. The interval 281 to 298 is membrane-binding amphipathic helix; it reads GAGLLKMFNKATDAVSKM. Residues 302 to 522 enclose the BAR domain; sequence MNESDIWFEE…AFLPEAKAIS (221 aa).

The protein belongs to the sorting nexin family. As to quaternary structure, predominantly forms heterodimers with BAR domain-containing sorting nexins SNX5, SNX6 and SNX32; can self-associate to form homodimers. The heterodimers are proposed to self-assemble into helical arrays on the membrane to stabilize and expand local membrane curvature underlying endosomal tubule formation. Thought to be a component of the originally described retromer complex (also called SNX-BAR retromer) which is a pentamer containing the heterotrimeric retromer cargo-selective complex (CSC), also described as vacuolar protein sorting subcomplex (VPS) and a heterodimeric membrane-deforming subcomplex formed between SNX1 or SNX2 and SNX5 or SNX6 (also called SNX-BAR subcomplex); the respective CSC and SNX-BAR subcomplexes associate with low affinity. Interacts with SNX5, SNX6, SNX32, VPS26A, VPS29, VPS35, DRD5, DENND5A, KALRN, RHOG (GDP-bound form). The interaction with SNX2 is reported controversially. Interacts with DNAJC13; prevented by presence of HGS. Interacts with HGS.

The protein resides in the endosome membrane. The protein localises to the golgi apparatus. It localises to the trans-Golgi network membrane. Its subcellular location is the early endosome membrane. It is found in the cell projection. The protein resides in the lamellipodium. Its function is as follows. Involved in several stages of intracellular trafficking. Interacts with membranes containing phosphatidylinositol 3-phosphate (PtdIns(3P)) or phosphatidylinositol 3,5-bisphosphate (PtdIns(3,5)P2). Acts in part as component of the retromer membrane-deforming SNX-BAR subcomplex. The SNX-BAR retromer mediates retrograde transport of cargo proteins from endosomes to the trans-Golgi network (TGN) and is involved in endosome-to-plasma membrane transport for cargo protein recycling. The SNX-BAR subcomplex functions to deform the donor membrane into a tubular profile called endosome-to-TGN transport carrier (ETC). Can sense membrane curvature and has in vitro vesicle-to-membrane remodeling activity. Involved in retrograde endosome-to-TGN transport of lysosomal enzyme receptors (IGF2R, M6PR and SORT1). Plays a role in targeting ligand-activated EGFR to the lysosomes for degradation after endocytosis from the cell surface and release from the Golgi. Involvement in retromer-independent endocytic trafficking of P2RY1 and lysosomal degradation of protease-activated receptor-1/F2R. Promotes KALRN- and RHOG-dependent but retromer-independent membrane remodeling such as lamellipodium formation; the function is dependent on GEF activity of KALRN. Required for endocytosis of DRD5 upon agonist stimulation but not for basal receptor trafficking. The polypeptide is Sorting nexin-1 (SNX1) (Macaca fascicularis (Crab-eating macaque)).